Here is a 121-residue protein sequence, read N- to C-terminus: MIKLRLKRFGKKKEASFRIVACNSTSRRDGRPLQELGFYNPRTKETRLDTEALRTRLTQGAQPTDVVRTLLEKGGLLEKIERPSIAIGKAKLEKEKKAKAKTKEEENEGSKTESGSNEAES.

Positions 88–121 (GKAKLEKEKKAKAKTKEEENEGSKTESGSNEAES) are disordered. The segment covering 90 to 111 (AKLEKEKKAKAKTKEEENEGSK) has biased composition (basic and acidic residues). A compositionally biased stretch (polar residues) spans 112–121 (TESGSNEAES).

Belongs to the bacterial ribosomal protein bS16 family.

The polypeptide is Small ribosomal subunit protein bS16 (Prochlorococcus marinus (strain MIT 9215)).